We begin with the raw amino-acid sequence, 259 residues long: Protein GrpE (259 aa).

Disordered stretches follow at residues 1–74 (MNSD…IKGS) and 228–259 (PGPKVINEEIPDQSASNQELSESVDGSTKDEN). Positions 17–40 (SSQNNPSENSVSSPNSNESVNQVE) are enriched in low complexity. Composition is skewed to polar residues over residues 56–73 (VDTANEQSSTSCESNIKG) and 240–253 (QSASNQELSESVDG).

The protein belongs to the GrpE family. Homodimer.

The protein resides in the cytoplasm. Participates actively in the response to hyperosmotic and heat shock by preventing the aggregation of stress-denatured proteins, in association with DnaK and GrpE. It is the nucleotide exchange factor for DnaK and may function as a thermosensor. Unfolded proteins bind initially to DnaJ; upon interaction with the DnaJ-bound protein, DnaK hydrolyzes its bound ATP, resulting in the formation of a stable complex. GrpE releases ADP from DnaK; ATP binding to DnaK triggers the release of the substrate protein, thus completing the reaction cycle. Several rounds of ATP-dependent interactions between DnaJ, DnaK and GrpE are required for fully efficient folding. The chain is Protein GrpE from Prochlorococcus marinus (strain NATL2A).